We begin with the raw amino-acid sequence, 559 residues long: 5-epiaristolochene synthase (559 aa).

5 residues coordinate Mg(2+): Asp-312, Asp-316, Asp-455, Thr-459, and Glu-463. The short motif at 312–316 is the DDXXD motif element; the sequence is DDTYD.

It belongs to the terpene synthase family. As to quaternary structure, monomer. It depends on Mg(2+) as a cofactor. Expressed only in treated leaves an not detected in control leaves.

The protein localises to the cytoplasm. It carries out the reaction (2E,6E)-farnesyl diphosphate = (+)-5-epi-aristolochene + diphosphate. Its pathway is secondary metabolite biosynthesis; terpenoid biosynthesis. Catalyzes the cyclization of trans,trans-farnesyl diphosphate (FPP) to the bicyclic intermediate 5-epi-aristolochene, initial step in the conversion of FPP to the sesquiterpenoid antifungal phytoalexin capsidiol. Produces germacrene A as an enzyme-bound intermediate that is not released by the enzyme, but is further cyclized to produce the bicyclic 5-epi-aristolochene. This is 5-epiaristolochene synthase (EAS) from Capsicum annuum (Capsicum pepper).